A 173-amino-acid polypeptide reads, in one-letter code: Orotate phosphoribosyltransferase (173 aa).

Residues arginine 87, lysine 88, lysine 91, and 113-121 contribute to the 5-phospho-alpha-D-ribose 1-diphosphate site; that span reads EDIATTGQS. Residues threonine 117 and arginine 145 each coordinate orotate.

It belongs to the purine/pyrimidine phosphoribosyltransferase family. PyrE subfamily. In terms of assembly, homodimer. Mg(2+) serves as cofactor.

The catalysed reaction is orotidine 5'-phosphate + diphosphate = orotate + 5-phospho-alpha-D-ribose 1-diphosphate. It functions in the pathway pyrimidine metabolism; UMP biosynthesis via de novo pathway; UMP from orotate: step 1/2. Catalyzes the transfer of a ribosyl phosphate group from 5-phosphoribose 1-diphosphate to orotate, leading to the formation of orotidine monophosphate (OMP). This chain is Orotate phosphoribosyltransferase, found in Natronomonas pharaonis (strain ATCC 35678 / DSM 2160 / CIP 103997 / JCM 8858 / NBRC 14720 / NCIMB 2260 / Gabara) (Halobacterium pharaonis).